The sequence spans 140 residues: ATP synthase epsilon chain (140 aa).

Belongs to the ATPase epsilon chain family. F-type ATPases have 2 components, CF(1) - the catalytic core - and CF(0) - the membrane proton channel. CF(1) has five subunits: alpha(3), beta(3), gamma(1), delta(1), epsilon(1). CF(0) has three main subunits: a, b and c.

The protein resides in the cell inner membrane. Functionally, produces ATP from ADP in the presence of a proton gradient across the membrane. This is ATP synthase epsilon chain from Neisseria meningitidis serogroup B (strain ATCC BAA-335 / MC58).